Consider the following 576-residue polypeptide: Beta-bisabolene synthase (576 aa).

Residues arginine 286, aspartate 323, aspartate 327, arginine 466, and asparagine 469 each coordinate (2E,6E)-farnesyl diphosphate. Mg(2+)-binding residues include aspartate 323 and aspartate 327. The short motif at 323 to 327 (DDVYD) is the DDXXD motif element. The Mg(2+) site is built by asparagine 469, threonine 473, and glutamate 477.

This sequence belongs to the terpene synthase family. Tpsb subfamily. Requires Mg(2+) as cofactor. Mn(2+) is required as a cofactor.

Functionally, produces almost exclusively beta-bisabolene and only traces of alpha-bisabolol from (2E,6E)-farnesyl diphosphate in fragrance biosynthesis. This Santalum austrocaledonicum (Sandalwood) protein is Beta-bisabolene synthase.